The following is a 139-amino-acid chain: Peptide methionine sulfoxide reductase MsrB (139 aa).

The 123-residue stretch at Thr-9 to Asp-131 folds into the MsrB domain. 4 residues coordinate Zn(2+): Cys-48, Cys-51, Cys-97, and Cys-100. The Nucleophile role is filled by Cys-120.

This sequence belongs to the MsrB Met sulfoxide reductase family. Requires Zn(2+) as cofactor.

It catalyses the reaction L-methionyl-[protein] + [thioredoxin]-disulfide + H2O = L-methionyl-(R)-S-oxide-[protein] + [thioredoxin]-dithiol. This Pectobacterium atrosepticum (strain SCRI 1043 / ATCC BAA-672) (Erwinia carotovora subsp. atroseptica) protein is Peptide methionine sulfoxide reductase MsrB.